The following is a 629-amino-acid chain: Serine/threonine-protein kinase ICK (629 aa).

The region spanning 4–284 (YTTIKQLGDG…ASQALRYPYF (281 aa)) is the Protein kinase domain. Residues 10 to 18 (LGDGTYGSV) and Lys33 contribute to the ATP site. Residue Asp125 is the Proton acceptor of the active site. At Thr157 the chain carries Phosphothreonine. A Phosphotyrosine modification is found at Tyr159. Residue Ser161 is modified to Phosphoserine. Disordered regions lie at residues 292 to 322 (ISTQDSGKPQKDVQDKTGPPPYVKPAPPAQA), 454 to 482 (PSEPVGTGTSVSTQASSQRRDTPTLQSTA), and 579 to 629 (GYSS…PSRR). Positions 309-321 (GPPPYVKPAPPAQ) are enriched in pro residues. Positions 460–482 (TGTSVSTQASSQRRDTPTLQSTA) are enriched in polar residues.

Belongs to the protein kinase superfamily. CMGC Ser/Thr protein kinase family. CDC2/CDKX subfamily. Mg(2+) serves as cofactor. In terms of processing, autophosphorylated on serine and threonine residues. Phosphorylation at Thr-157 increases kinase activity. As to expression, expressed in embryonic heart from day 11. Highly expressed in the uterus and at lower levels in brain, heart, lung, kidney, skeletal muscle, ovary and liver in adult tissues.

The protein resides in the cytoplasm. It localises to the cell projection. Its subcellular location is the cilium. The protein localises to the nucleus. It is found in the cytoskeleton. The protein resides in the cilium basal body. It catalyses the reaction L-seryl-[protein] + ATP = O-phospho-L-seryl-[protein] + ADP + H(+). It carries out the reaction L-threonyl-[protein] + ATP = O-phospho-L-threonyl-[protein] + ADP + H(+). In terms of biological role, required for ciliogenesis, particularly in neuronal and retinal progenitor cells. Phosphorylates KIF3A. Involved in the control of ciliary length. Regulates the ciliary localization of SHH pathway components as well as the localization of IFT components at ciliary tips. May play a role in cardiac development. Regulates intraflagellar transport (IFT) speed and negatively regulates cilium length in a cAMP and mTORC1 signaling-dependent manner and this regulation requires its kinase activity. This chain is Serine/threonine-protein kinase ICK (Cilk1), found in Rattus norvegicus (Rat).